The sequence spans 250 residues: Large ribosomal subunit protein uL29m (250 aa).

The transit peptide at Met1–Cys24 directs the protein to the mitochondrion. The interval Val66–Val86 is disordered.

Belongs to the universal ribosomal protein uL29 family. Component of the mitochondrial large ribosomal subunit. Mature mitochondrial ribosomes consist of a small (37S) and a large (54S) subunit. The 37S subunit contains at least 33 different proteins and 1 molecule of RNA (15S). The 54S subunit contains at least 45 different proteins and 1 molecule of RNA (21S).

It localises to the mitochondrion. This Phaeosphaeria nodorum (strain SN15 / ATCC MYA-4574 / FGSC 10173) (Glume blotch fungus) protein is Large ribosomal subunit protein uL29m (MRPL4).